A 1242-amino-acid polypeptide reads, in one-letter code: Phosphorylase b kinase regulatory subunit alpha, skeletal muscle isoform (1242 aa).

9 positions are modified to phosphoserine: Ser-630, Ser-731, Ser-737, Ser-740, Ser-760, Ser-813, Ser-974, Ser-983, and Ser-987. A calmodulin-binding region spans residues 812–842 (LSELYVKVGEIRHWGLIRYISGILRKKVEAL). Ser-1009 carries the post-translational modification Phosphoserine; by autocatalysis. Ser-1020 bears the Phosphoserine; by PKA mark. 2 positions are modified to phosphoserine: Ser-1022 and Ser-1025. The tract at residues 1065-1105 (SKDSRQGQWQRRRRLDGALNRVPIGFYQKVWKILQKCHGLS) is calmodulin-binding. Ser-1132 carries the phosphoserine modification. Cys-1239 carries the S-farnesyl cysteine lipid modification.

It belongs to the phosphorylase b kinase regulatory chain family. In terms of assembly, hexadecamer of 4 heterotetramers, each composed of alpha, beta, gamma, and delta subunits. Alpha (PHKA1 or PHKA2) and beta (PHKB) are regulatory subunits, gamma (PHKG1 or PHKG2) is the catalytic subunit, and delta is calmodulin. Although the final Cys may be farnesylated, the terminal tripeptide is probably not removed, and the C-terminus is not methylated.

The protein resides in the cell membrane. It functions in the pathway glycan biosynthesis; glycogen metabolism. By phosphorylation of various serine residues and by calcium. In terms of biological role, phosphorylase b kinase catalyzes the phosphorylation of serine in certain substrates, including troponin I. The alpha chain may bind calmodulin. This is Phosphorylase b kinase regulatory subunit alpha, skeletal muscle isoform (Phka1) from Rattus norvegicus (Rat).